The sequence spans 243 residues: Uridylate kinase (243 aa).

12–15 is an ATP binding site; it reads KLSG. The involved in allosteric activation by GTP stretch occupies residues 20-25; that stretch reads GPGGSG. Residue glycine 56 coordinates UMP. Positions 57 and 61 each coordinate ATP. Residues aspartate 76 and 137–144 each bind UMP; that span reads TGSPYFST. Residues asparagine 165, tyrosine 171, and aspartate 174 each coordinate ATP.

This sequence belongs to the UMP kinase family. In terms of assembly, homohexamer.

Its subcellular location is the cytoplasm. It catalyses the reaction UMP + ATP = UDP + ADP. The protein operates within pyrimidine metabolism; CTP biosynthesis via de novo pathway; UDP from UMP (UMPK route): step 1/1. Allosterically activated by GTP. Inhibited by UTP. In terms of biological role, catalyzes the reversible phosphorylation of UMP to UDP. The protein is Uridylate kinase of Oenococcus oeni (strain ATCC BAA-331 / PSU-1).